The following is a 364-amino-acid chain: O-methyltransferase ZRP4 (364 aa).

Gly-208, Asp-231, Asp-251, Met-252, and Lys-265 together coordinate S-adenosyl-L-methionine. The active-site Proton acceptor is the His-269.

It belongs to the class I-like SAM-binding methyltransferase superfamily. Cation-independent O-methyltransferase family. COMT subfamily. As to quaternary structure, homodimer. In terms of tissue distribution, accumulates preferentially in the roots and is located predominantly in the region of the endodermis, low levels are seen in the leaves, stems and other shoot organs.

Functionally, may be involved in the O-methylation of suberin phenylpropanoid precursors. This is O-methyltransferase ZRP4 (ZRP4) from Zea mays (Maize).